The following is a 283-amino-acid chain: Quinate/shikimate dehydrogenase (NAD(+)) (283 aa).

Residues serine 17, threonine 69, lysine 73, asparagine 94, and aspartate 110 each contribute to the shikimate site. L-quinate is bound by residues 17-19 (SRT), threonine 69, lysine 73, asparagine 94, and aspartate 110. The active-site Proton acceptor is lysine 73. NAD(+) is bound by residues 137-138 (GV), aspartate 158, arginine 163, 203-206 (PMGM), alanine 213, valine 228, and glycine 251. Glutamine 258 is a shikimate binding site. An L-quinate-binding site is contributed by glutamine 258.

It belongs to the shikimate dehydrogenase family. In terms of assembly, homodimer.

The catalysed reaction is L-quinate + NAD(+) = 3-dehydroquinate + NADH + H(+). It carries out the reaction shikimate + NAD(+) = 3-dehydroshikimate + NADH + H(+). It functions in the pathway metabolic intermediate biosynthesis; chorismate biosynthesis; chorismate from D-erythrose 4-phosphate and phosphoenolpyruvate: step 4/7. The protein operates within aromatic compound metabolism; 3,4-dihydroxybenzoate biosynthesis; 3-dehydroquinate from D-quinate (NAD(+) route). Functionally, involved in the biosynthesis of the chorismate, which leads to the biosynthesis of aromatic amino acids, and plays a key role in the quinate degradation pathway. Catalyzes the NAD(+)-dependent oxidation of both quinate and shikimate to 3-dehydroquinate and 3-dehydroshikimate, respectively. The polypeptide is Quinate/shikimate dehydrogenase (NAD(+)) (Corynebacterium glutamicum (strain R)).